The following is a 1562-amino-acid chain: Neuralized-like protein 4 (1562 aa).

The segment covering 1–42 (MAAGSGGSGGSGGGPGPGPGGGGGPSGSGSGPGSNGGLGSGG) has biased composition (gly residues). Disordered stretches follow at residues 1-48 (MAAG…HPRT) and 207-236 (PEPGFSPPTPIPTPPLEPLAPTEDSALAEQ). NHR domains follow at residues 41-207 (GGEL…VLPP) and 317-484 (ALLF…IVHN). The span at 207–224 (PEPGFSPPTPIPTPPLEP) shows a compositional bias: pro residues. At S502 the chain carries Phosphoserine. NHR domains follow at residues 520 to 686 (RLLF…IVDD) and 716 to 884 (DLRF…ITNA). Positions 691–716 (PVPEPLPEGNNQVSPSSPSSGAGGSD) are disordered. At S907 the chain carries Phosphoserine. Residues 913 to 1086 (AHRFHSTCGK…PVRGVSIVSS (174 aa)) enclose the NHR 5 domain. Residues 1086 to 1123 (STRLEESEGTQPPSPSSDTGSEGEEDDEGEEHGLGGQN) form a disordered region. Residues 1106–1115 (SEGEEDDEGE) are compositionally biased toward acidic residues. Positions 1131-1294 (TLEFLENHGK…QCEQVTIVNP (164 aa)) constitute an NHR 6 domain.

In terms of assembly, interacts with CCP110; this interaction propmotes CCP110 ubiquitination and degradation via the proteasome pathway. Via its interaction with CCP110, may indirectly interact with CEP97. Interacts with the E3 ubiquitin-protein ligase HERC2 and UBE3A. May interact with MAPK6 and hence mediate MAPK6 interaction with UBE3A. Interaction with UBE3A may be indirect and mediated by HERC2. Post-translationally, ubiquitinated; undergoes HERC2-dependent 'Lys-48' ubiquitination. This ubiquitination leads to proteasomal degradation. As to expression, widely expressed at high levels (including brain).

It localises to the cytoplasm. Its subcellular location is the cytoskeleton. It is found in the microtubule organizing center. The protein resides in the centrosome. The protein localises to the centriole. Promotes CCP110 ubiquitination and proteasome-dependent degradation. By counteracting accumulation of CP110, maintains normal centriolar homeostasis and preventing formation of ectopic microtubular organizing centers. In Homo sapiens (Human), this protein is Neuralized-like protein 4 (NEURL4).